The following is a 154-amino-acid chain: Myoglobin (154 aa).

The 147-residue stretch at G2 to K148 folds into the Globin domain. S4 carries the phosphoserine modification. H65 is a nitrite binding site. Residue H65 participates in O2 binding. T68 is modified (phosphothreonine). H94 lines the heme b pocket.

As to quaternary structure, monomer.

It localises to the cytoplasm. The protein localises to the sarcoplasm. It carries out the reaction Fe(III)-heme b-[protein] + nitric oxide + H2O = Fe(II)-heme b-[protein] + nitrite + 2 H(+). The catalysed reaction is H2O2 + AH2 = A + 2 H2O. In terms of biological role, monomeric heme protein which primary function is to store oxygen and facilitate its diffusion within muscle tissues. Reversibly binds oxygen through a pentacoordinated heme iron and enables its timely and efficient release as needed during periods of heightened demand. Depending on the oxidative conditions of tissues and cells, and in addition to its ability to bind oxygen, it also has a nitrite reductase activity whereby it regulates the production of bioactive nitric oxide. Under stress conditions, like hypoxia and anoxia, it also protects cells against reactive oxygen species thanks to its pseudoperoxidase activity. This chain is Myoglobin (MB), found in Delphinapterus leucas (Beluga whale).